The sequence spans 292 residues: NAD kinase (292 aa).

D73 acts as the Proton acceptor in catalysis. NAD(+) contacts are provided by residues 73–74, 147–148, H158, R175, D177, 188–193, and Q247; these read DG, NE, and TAYSLS.

It belongs to the NAD kinase family. A divalent metal cation serves as cofactor.

Its subcellular location is the cytoplasm. The catalysed reaction is NAD(+) + ATP = ADP + NADP(+) + H(+). Functionally, involved in the regulation of the intracellular balance of NAD and NADP, and is a key enzyme in the biosynthesis of NADP. Catalyzes specifically the phosphorylation on 2'-hydroxyl of the adenosine moiety of NAD to yield NADP. This Salmonella choleraesuis (strain SC-B67) protein is NAD kinase.